A 108-amino-acid polypeptide reads, in one-letter code: UPF0102 protein Shewmr4_3685 (108 aa).

It belongs to the UPF0102 family.

The polypeptide is UPF0102 protein Shewmr4_3685 (Shewanella sp. (strain MR-4)).